Here is a 182-residue protein sequence, read N- to C-terminus: Lipid A acyltransferase PagP (182 aa).

Residues 1–21 form the signal peptide; sequence MTQYFRALAFFLLLVPATAMA. A lipid anchor (N-palmitoyl cysteine) is attached at Cys22. A lipid anchor (S-diacylglycerol cysteine) is attached at Cys22. Catalysis depends on residues His55, Asp98, and Ser99.

Belongs to the lipid A palmitoyltransferase family. Homodimer.

The protein resides in the cell outer membrane. It catalyses the reaction a lipid A + a 1,2-diacyl-sn-glycero-3-phosphocholine = a hepta-acyl lipid A + a 2-acyl-sn-glycero-3-phosphocholine. The enzyme catalyses a lipid IVA + a 1,2-diacyl-sn-glycero-3-phosphocholine = a lipid IVB + a 2-acyl-sn-glycero-3-phosphocholine. The catalysed reaction is a lipid IIA + a 1,2-diacyl-sn-glycero-3-phosphocholine = a lipid IIB + a 2-acyl-sn-glycero-3-phosphocholine. Functionally, transfers a fatty acid residue from the sn-1 position of a phospholipid to the N-linked hydroxyfatty acid chain on the proximal unit of lipid A or its precursors. This is Lipid A acyltransferase PagP from Bordetella parapertussis (strain 12822 / ATCC BAA-587 / NCTC 13253).